Reading from the N-terminus, the 121-residue chain is Large ribosomal subunit protein uL18 (121 aa).

Belongs to the universal ribosomal protein uL18 family. Part of the 50S ribosomal subunit; part of the 5S rRNA/L5/L18/L25 subcomplex. Contacts the 5S and 23S rRNAs.

In terms of biological role, this is one of the proteins that bind and probably mediate the attachment of the 5S RNA into the large ribosomal subunit, where it forms part of the central protuberance. This chain is Large ribosomal subunit protein uL18, found in Streptococcus suis (strain 98HAH33).